Here is a 489-residue protein sequence, read N- to C-terminus: Betaine aldehyde dehydrogenase (489 aa).

Residues threonine 26 and aspartate 93 each contribute to the K(+) site. Position 150-152 (150-152 (GAW)) interacts with NAD(+). Lysine 162 (charge relay system) is an active-site residue. 176-179 (KPSE) provides a ligand contact to NAD(+). Valine 180 serves as a coordination point for K(+). Residue 229-232 (GVET) coordinates NAD(+). Leucine 245 contributes to the K(+) binding site. Catalysis depends on glutamate 251, which acts as the Proton acceptor. NAD(+) is bound by residues glycine 253, cysteine 285, and glutamate 386. Cysteine 285 (nucleophile) is an active-site residue. The residue at position 285 (cysteine 285) is a Cysteine sulfenic acid (-SOH). Residues lysine 456 and glycine 459 each contribute to the K(+) site. Residue glutamate 463 is the Charge relay system of the active site.

This sequence belongs to the aldehyde dehydrogenase family. In terms of assembly, dimer of dimers. K(+) serves as cofactor.

It catalyses the reaction betaine aldehyde + NAD(+) + H2O = glycine betaine + NADH + 2 H(+). It participates in amine and polyamine biosynthesis; betaine biosynthesis via choline pathway; betaine from betaine aldehyde: step 1/1. Functionally, involved in the biosynthesis of the osmoprotectant glycine betaine. Catalyzes the irreversible oxidation of betaine aldehyde to the corresponding acid. This Burkholderia orbicola (strain MC0-3) protein is Betaine aldehyde dehydrogenase.